The sequence spans 788 residues: MKDKSIKVLEFNKIQEFLKNYTCTKAAKDIIEDLKPYDSVYEVREHLEETKEAFKLLITKGAPPFEGVYDIRSGISLAEKRSTLLPGQLLKIAAVLRCARRFKEYINHKEEEESYRVLENICEGIFSLPKIEEEIFNAIEGEDEIADRASSTLYNIRRSLKEKNYSVRDKINSLVRSYSSYLQENIYTVRGDRYVLPVKAEHKGAVPGLVHDQSSTGATLFIEPMSLVNLNNEIKELMLKEKAEIERILTVLSAKINANITGVKTDANIVWELDFIFAKAKFASEYNCTCPTINDEGIVDIIEGRHPLIDRREVVPISVKLGEEFTSLMITGPNTGGKTVTLKTVGLIHLMAMSGLMIPARENSVISYFNNVFADIGDEQSIEQSLSTFSSHMKNIVEIMDKADENSLVLFDELGAGTDPTEGAALAISILENLRKRGTKIIATTHYSELKAYALKKEGVENASVEFDVETLRPTYRLLIGIPGKSNAFEISKRLGLPDYIIDFARENISNENIRFEELIENLQEKSIKAQEDARLAENLKLERDKEKKKYEEKLEGLQKVRDNALIDARREAKNIIKEAKEEADKILKDIRQLERMGYSSDARRKLEEERKKLKDKLDSIEEKEIKTVHKGEALKNVKEGDEVLLASINQKVIVLSKPDNKGDVLVQAGIMKITANIKDLRAAKGSNSNSSSSKIKKSKKLNLNLRRVESSVDLRGMDAEEAIYTVDKYLDEAYLGGLGEVTIVHGKGTGVLRKTIMDMLKGHSHVKKYRLGEYGEGGTGVTVVELK.

An ATP-binding site is contributed by 332 to 339 (GPNTGGKT). A Smr domain is found at 713-788 (VDLRGMDAEE…GTGVTVVELK (76 aa)).

Belongs to the DNA mismatch repair MutS family. MutS2 subfamily. In terms of assembly, homodimer. Binds to stalled ribosomes, contacting rRNA.

Functionally, endonuclease that is involved in the suppression of homologous recombination and thus may have a key role in the control of bacterial genetic diversity. Its function is as follows. Acts as a ribosome collision sensor, splitting the ribosome into its 2 subunits. Detects stalled/collided 70S ribosomes which it binds and splits by an ATP-hydrolysis driven conformational change. Acts upstream of the ribosome quality control system (RQC), a ribosome-associated complex that mediates the extraction of incompletely synthesized nascent chains from stalled ribosomes and their subsequent degradation. Probably generates substrates for RQC. The chain is Endonuclease MutS2 from Clostridium botulinum (strain Okra / Type B1).